The chain runs to 321 residues: Large ribosomal RNA subunit accumulation protein YCED homolog 1, chloroplastic (321 aa).

The N-terminal 32 residues, 1-32 (MSLVCSLSCVAPLPQTKQSRPSFLKLETCTLS), are a transit peptide targeting the chloroplast.

This sequence belongs to the DUF177 domain family.

It localises to the plastid. The protein resides in the chloroplast stroma. It is found in the chloroplast nucleoid. Functionally, plays a role in synthesis, processing and/or stability of 23S rRNA. Required for embryogenesis. This Arabidopsis thaliana (Mouse-ear cress) protein is Large ribosomal RNA subunit accumulation protein YCED homolog 1, chloroplastic.